Consider the following 131-residue polypeptide: Fluoride-specific ion channel FluC 1 (131 aa).

The next 3 helical transmembrane spans lie at 38-58 (FPLSTLVINGVASLCAGIAMM), 69-89 (TVMMFVVGFLGGFSTFSTALN), and 108-128 (IATVAVPLICVAAGFGIALLA). The Na(+) site is built by Gly-79 and Ser-82.

Belongs to the fluoride channel Fluc/FEX (TC 1.A.43) family.

It is found in the cell membrane. The catalysed reaction is fluoride(in) = fluoride(out). With respect to regulation, na(+) is not transported, but it plays an essential structural role and its presence is essential for fluoride channel function. Its function is as follows. Fluoride-specific ion channel. Important for reducing fluoride concentration in the cell, thus reducing its toxicity. The sequence is that of Fluoride-specific ion channel FluC 1 from Bifidobacterium longum (strain NCC 2705).